Reading from the N-terminus, the 125-residue chain is uncharacterized protein (125 aa).

It belongs to the asfivirus B125R family.

This is an uncharacterized protein from African swine fever virus (isolate Pig/Kenya/KEN-50/1950) (ASFV).